The sequence spans 247 residues: Ubiquinone biosynthesis O-methyltransferase (247 aa).

S-adenosyl-L-methionine-binding residues include Arg-45, Gly-65, Asp-86, and Leu-130.

This sequence belongs to the methyltransferase superfamily. UbiG/COQ3 family.

The enzyme catalyses a 3-demethylubiquinol + S-adenosyl-L-methionine = a ubiquinol + S-adenosyl-L-homocysteine + H(+). It carries out the reaction a 3-(all-trans-polyprenyl)benzene-1,2-diol + S-adenosyl-L-methionine = a 2-methoxy-6-(all-trans-polyprenyl)phenol + S-adenosyl-L-homocysteine + H(+). The protein operates within cofactor biosynthesis; ubiquinone biosynthesis. Functionally, O-methyltransferase that catalyzes the 2 O-methylation steps in the ubiquinone biosynthetic pathway. In Alkalilimnicola ehrlichii (strain ATCC BAA-1101 / DSM 17681 / MLHE-1), this protein is Ubiquinone biosynthesis O-methyltransferase.